Reading from the N-terminus, the 429-residue chain is MKKQNNLRSLAAQAVEQVVEQGQSLSNVLPPLQQKVADKDKALLQELCFGVLRTLSQLEWLINKLMSRPMTGKQRTVHYLIMVGFYQLLYTRVPPHAALAETVEGAVSIKRPQLKGLINGVLRQFQRQQETLLNEFATSDARFLHPGWLVKRLQNAYPTQWQRIIEANNQRPPMWLRVNRTHHTRDGWLGLLEDAGMKGYPHPDYPDAVRLETPAPVHALPGFAEGWVTVQDASAQGCAVFLAPQNGEHILDLCSAPGGKTTHILEVAPEADVLAVDIDEQRLSRVYDNLKRLGMKATVKQGDGRYPAQWCGEQQFDRILLDAPCSATGVIRRHPDIKWLRRDRDIVELAQLQAEILDAVWPRLKPGGTLVYATCSVLPEENRDQIKTFLQRTPDAALSETGTPDQPGQQNLPGGEEGDGFFYAKLIKK.

S-adenosyl-L-methionine-binding positions include 254–260, Asp-277, Asp-303, and Asp-322; that span reads CSAPGGK. Residue Cys-375 is the Nucleophile of the active site. Residues 397–419 form a disordered region; the sequence is ALSETGTPDQPGQQNLPGGEEGD. Residues 400-412 are compositionally biased toward polar residues; it reads ETGTPDQPGQQNL.

This sequence belongs to the class I-like SAM-binding methyltransferase superfamily. RsmB/NOP family.

The protein localises to the cytoplasm. It carries out the reaction cytidine(967) in 16S rRNA + S-adenosyl-L-methionine = 5-methylcytidine(967) in 16S rRNA + S-adenosyl-L-homocysteine + H(+). In terms of biological role, specifically methylates the cytosine at position 967 (m5C967) of 16S rRNA. The sequence is that of Ribosomal RNA small subunit methyltransferase B from Salmonella dublin (strain CT_02021853).